A 576-amino-acid polypeptide reads, in one-letter code: Sodium/hydrogen exchanger 8 (576 aa).

11 consecutive transmembrane segments (helical) span residues 55-75 (MTIFFSLLVLAICIILVHLLI), 79-99 (LHFLPESVAVVSLGILMGAVI), 118-138 (PNMFFLLLLPPIIFESGYSLH), 151-171 (LFAVFGTAISAFVVGGGIYFL), 186-206 (FAFGSLISAVDPVATIAIFNA), 256-276 (LGYFLKMFFGSAALGTLTGLI), 306-326 (GLAEGISLSGIMAILFSGIVM), 349-369 (VAFLCETCVFAFLGLSIFSFP), 374-394 (ISFVIWCIVLVLFGRAVNIFP), 412-432 (MFIMWFSGLRGAIPYALSLHL), and 446-466 (TTIVIVLFTILLLGGSTMPLI). T505 is subject to Phosphothreonine. Phosphoserine is present on residues S566 and S568.

This sequence belongs to the monovalent cation:proton antiporter 1 (CPA1) transporter (TC 2.A.36) family. As to expression, predominantly expressed in the liver, skeletal muscle, kidney, and testis. Expressed in both renal cortex and medulla. Detected throughout the entire gastrointestinal tract, with high expression detected in stomach, duodenum and ascending colon. In gastric epithelium; expressed in the glands within the fundus and pylorus regions.

It is found in the golgi apparatus membrane. The protein resides in the golgi apparatus. It localises to the trans-Golgi network membrane. Its subcellular location is the endosome. The protein localises to the multivesicular body membrane. It is found in the apical cell membrane. The protein resides in the cytoplasmic vesicle. It localises to the secretory vesicle. Its subcellular location is the acrosome. It carries out the reaction Na(+)(in) + H(+)(out) = Na(+)(out) + H(+)(in). In terms of biological role, na(+)/H(+) antiporter. Mediates the electoneutral exchange of intracellular H(+) ions for extracellular Na(+) in 1:1 stoichiometry. Acts as an Na(+)/H(+) exchanger in the trans-Golgi. Contributes to the regulation of pH regulation of Golgi apparatus, and consequently, in protein trafficking and endosomal morphology. Plays a crucial role in germ cells in acrosome biogenesis and sperm development, probably by playing a role in the fusion of the Golgi-derived vesicles that form the acrosomal cap. Can also be active at the cell surface of specialized cells. In the small intestine, plays a major physiological role in transepithelial absorption of Na(+). Regulates intracellular pH homeostasis of intestinal epithelial cells. Acts as an important regulator of mucosal integrity in the intestine and in the stomach, could mediate the pH fluctuation necessary for mucin exocytosis or assist membrane trafficking of other proteins. Plays a role in photoreceptor survival and in the maintenance of intracellular pH homeostasis in retinal pigment epithelium (RPE cells). This Mus musculus (Mouse) protein is Sodium/hydrogen exchanger 8 (Slc9a8).